A 156-amino-acid chain; its full sequence is Small ribosomal subunit protein uS7c (156 aa).

This sequence belongs to the universal ribosomal protein uS7 family. As to quaternary structure, part of the 30S ribosomal subunit.

The protein localises to the plastid. The protein resides in the chloroplast. Its function is as follows. One of the primary rRNA binding proteins, it binds directly to 16S rRNA where it nucleates assembly of the head domain of the 30S subunit. The chain is Small ribosomal subunit protein uS7c (rps7) from Gracilaria tenuistipitata var. liui (Red alga).